Consider the following 221-residue polypeptide: Ependymin-2 (221 aa).

A signal peptide spans methionine 1–alanine 21. Residues asparagine 33, asparagine 73, and asparagine 97 are each glycosylated (N-linked (GlcNAc...) asparagine).

It belongs to the ependymin family. In terms of processing, binds calcium through the terminal sialic acids. As to expression, EPDs are synthesized in the meninx and secreted in the cerebrospinal fluid.

It is found in the secreted. In terms of biological role, may play a role in neural plasticity. May be involved during axon regeneration. In Salmo salar (Atlantic salmon), this protein is Ependymin-2 (epd2).